The chain runs to 380 residues: Cytochrome b (380 aa).

A run of 4 helical transmembrane segments spans residues 33 to 53 (FGSLLGLCLITQILTGLFLAM), 77 to 98 (WLIRNIHANGASFFFICIYMHI), 113 to 133 (WNIGVVLLLLVMMTAFVGYVL), and 178 to 198 (FFAFHFLLPFIIAAATVIHLL). Residues histidine 83 and histidine 97 each coordinate heme b. Residues histidine 182 and histidine 196 each contribute to the heme b site. Histidine 201 contributes to the a ubiquinone binding site. 4 consecutive transmembrane segments (helical) span residues 226 to 246 (YKDLLGFVIMLLALTLLALFS), 288 to 308 (LGGVLALLFSILVLMVVPLLH), 320 to 340 (ITQFLFWTLVADMIILTWIGG), and 347 to 367 (FIIIGQIASVLYFALFLVLFP).

The protein belongs to the cytochrome b family. The cytochrome bc1 complex contains 3 respiratory subunits (MT-CYB, CYC1 and UQCRFS1), 2 core proteins (UQCRC1 and UQCRC2) and probably 6 low-molecular weight proteins. Heme b serves as cofactor.

The protein localises to the mitochondrion inner membrane. Component of the ubiquinol-cytochrome c reductase complex (complex III or cytochrome b-c1 complex) that is part of the mitochondrial respiratory chain. The b-c1 complex mediates electron transfer from ubiquinol to cytochrome c. Contributes to the generation of a proton gradient across the mitochondrial membrane that is then used for ATP synthesis. This Carassius auratus (Goldfish) protein is Cytochrome b (mt-cyb).